We begin with the raw amino-acid sequence, 123 residues long: MALTKEDILNAIAEMPVMDLVELIEAAEEKFGVTATAAVAAAAPAAGGEAAAEQTEFDVVLTSFGGNKVAVIKAVRGATGLGLKEAKEVVEAAPKAIKEGVAKEEAEELKKTLEEAGAEVELK.

Belongs to the bacterial ribosomal protein bL12 family. In terms of assembly, homodimer. Part of the ribosomal stalk of the 50S ribosomal subunit. Forms a multimeric L10(L12)X complex, where L10 forms an elongated spine to which 2 to 4 L12 dimers bind in a sequential fashion. Binds GTP-bound translation factors.

Its function is as follows. Forms part of the ribosomal stalk which helps the ribosome interact with GTP-bound translation factors. Is thus essential for accurate translation. This chain is Large ribosomal subunit protein bL12, found in Pseudoalteromonas atlantica (strain T6c / ATCC BAA-1087).